The sequence spans 506 residues: Mitogen-activated protein kinase 13 (506 aa).

In terms of domain architecture, Protein kinase spans 13-304 (YQIQEVVGKG…AEEALADPYF (292 aa)). Residues 19-27 (VGKGSYGVV) and Lys-42 contribute to the ATP site. The Proton acceptor role is filled by Asp-139. Phosphothreonine is present on Thr-175. The TXY motif lies at 175–177 (TDY). Tyr-177 is modified (phosphotyrosine). A disordered region spans residues 384 to 421 (YSRGERSTPLRRQHASLPRERVCSSVDSNNQDSDNEER).

The protein belongs to the protein kinase superfamily. CMGC Ser/Thr protein kinase family. MAP kinase subfamily. Post-translationally, dually phosphorylated on Thr-175 and Tyr-177, which activates the enzyme.

The catalysed reaction is L-seryl-[protein] + ATP = O-phospho-L-seryl-[protein] + ADP + H(+). The enzyme catalyses L-threonyl-[protein] + ATP = O-phospho-L-threonyl-[protein] + ADP + H(+). Activated by threonine and tyrosine phosphorylation. The polypeptide is Mitogen-activated protein kinase 13 (MPK13) (Oryza sativa subsp. indica (Rice)).